The primary structure comprises 188 residues: Probable manganese efflux pump MntP (188 aa).

6 helical membrane passes run tyrosine 3–glycine 23, leucine 41–alanine 61, leucine 66–isoleucine 86, tryptophan 106–phenylalanine 128, alanine 143–glycine 163, and isoleucine 168–glycine 188.

This sequence belongs to the MntP (TC 9.B.29) family.

Its subcellular location is the cell inner membrane. Functionally, probably functions as a manganese efflux pump. This chain is Probable manganese efflux pump MntP, found in Salmonella heidelberg (strain SL476).